The following is a 42-amino-acid chain: Photosystem I reaction center subunit IX (42 aa).

A helical transmembrane segment spans residues 7-27 (FLSSAPVLIMALLTFTAGILI).

Belongs to the PsaJ family.

Its subcellular location is the cellular thylakoid membrane. May help in the organization of the PsaE and PsaF subunits. This Microcystis aeruginosa (strain NIES-843 / IAM M-2473) protein is Photosystem I reaction center subunit IX.